We begin with the raw amino-acid sequence, 480 residues long: MNRKLFMTGLLMLAMTMQAQTAKKFTLNLSDDGKAQMVCFLPENPSGRAIVGVPGGGYSMLSNTHEGYQASDWLNKQGIAYFVVNYRLPHGDRTIPVGDVEQGFRIVRDSAKVWNINPNDVGIMGFSAGGHLSSVISTMSPYEVRPNFSILFYPVISMDERVSHKWSCINFLGKEGYKDPKLIGQYSTQNAVRSHLTPPACIISANDDRLVPVVTNGIQYYSAMRNAGNECSLFIYPSGDHGFGFGTWFKYHDQLLQDLGNWLKSIPAPKEDAIRVACIGNSITDGFGIDMRAKYGYPAQLQGILGDGYWVKNFGVSARTMLNKGDFPYMNEMAWKDALAFKPDVVVIKLGTNDSKPENWQYGSEFRQDLEQMIKALRPDLAQPAKKGKKKAKAAAQPAGPKILLCTPIPAFKPSWNINDKVITDEIIPIQQEVAKQYGLQIIDLHALMLNDGDKVVDDGIHPNEKGAKKMAEIIAAAIK.

An N-terminal signal peptide occupies residues 1–19 (MNRKLFMTGLLMLAMTMQA).

This sequence belongs to the AB hydrolase superfamily.

It catalyses the reaction Deacetylation of xylans and xylo-oligosaccharides.. The protein operates within glycan degradation; xylan degradation. Its function is as follows. Involved in degradation of plant cell wall polysaccharides. Is an acetyl esterase with broad substrate specificity, releasing acetic acid from acetylated xylo-oligosaccharides and acetylated xylan as well as xylose-tetraacetate, 4-O-methylumbelliferyl acetate, glucose-pentaacetate, and cephalosporin C. Appears to have greater activity on oligosaccharides than on polymeric substrates. Is also able to release acetic acid from xylo-oligosaccharides with 4-O-methylglucuronic acid side groups proximally located to O-acetyl esters. Preferentially targets xylo-oligosaccharides possessing three or more O-acetyl groups, but following their depletion it is active on the less acetylated portion of the substrate. This Xylanibacter ruminicola (strain ATCC 19189 / DSM 19721 / CIP 105475 / JCM 8958 / 23) (Prevotella ruminicola) protein is Acetylxylan esterase.